Here is a 75-residue protein sequence, read N- to C-terminus: UPF0154 protein MYPE400 (75 aa).

The helical transmembrane segment at 5–27 (IGLCLGLGIPISLIIGAVIGYYF) threads the bilayer.

This sequence belongs to the UPF0154 family.

It is found in the membrane. This chain is UPF0154 protein MYPE400, found in Malacoplasma penetrans (strain HF-2) (Mycoplasma penetrans).